The primary structure comprises 35 residues: uncharacterized protein (35 aa).

The first 25 residues, 1–25 (MTERKLLQLLRRPFISLSLFTALRA), serve as a signal peptide directing secretion.

This is an uncharacterized protein from Saccharomyces cerevisiae (strain ATCC 204508 / S288c) (Baker's yeast).